The following is a 51-amino-acid chain: Large ribosomal subunit protein eL39 (51 aa).

This sequence belongs to the eukaryotic ribosomal protein eL39 family. In terms of assembly, part of the 50S ribosomal subunit.

In Thermococcus kodakarensis (strain ATCC BAA-918 / JCM 12380 / KOD1) (Pyrococcus kodakaraensis (strain KOD1)), this protein is Large ribosomal subunit protein eL39.